We begin with the raw amino-acid sequence, 130 residues long: Large ribosomal subunit protein bL21 (130 aa).

The disordered stretch occupies residues 103–130 (AGGKTSKAEPRKTRKAEPAAESAPAAAE). Over residues 108–120 (SKAEPRKTRKAEP) the composition is skewed to basic and acidic residues. Residues 121–130 (AAESAPAAAE) show a composition bias toward low complexity.

This sequence belongs to the bacterial ribosomal protein bL21 family. As to quaternary structure, part of the 50S ribosomal subunit. Contacts protein L20.

In terms of biological role, this protein binds to 23S rRNA in the presence of protein L20. This Methylorubrum extorquens (strain CM4 / NCIMB 13688) (Methylobacterium extorquens) protein is Large ribosomal subunit protein bL21.